The sequence spans 476 residues: Adenosylhomocysteinase (476 aa).

The substrate site is built by threonine 67, aspartate 142, and glutamate 202. An NAD(+)-binding site is contributed by 203-205 (TTT). Residues lysine 232 and aspartate 236 each contribute to the substrate site. NAD(+) is bound by residues asparagine 237, 266-271 (GYGDVG), glutamate 289, asparagine 324, 345-347 (IGH), and asparagine 390.

It belongs to the adenosylhomocysteinase family. NAD(+) is required as a cofactor.

Its subcellular location is the cytoplasm. It carries out the reaction S-adenosyl-L-homocysteine + H2O = L-homocysteine + adenosine. Its pathway is amino-acid biosynthesis; L-homocysteine biosynthesis; L-homocysteine from S-adenosyl-L-homocysteine: step 1/1. Its function is as follows. May play a key role in the regulation of the intracellular concentration of adenosylhomocysteine. In Prochlorococcus marinus (strain MIT 9313), this protein is Adenosylhomocysteinase.